The sequence spans 549 residues: CTP synthase (549 aa).

An amidoligase domain region spans residues 1–266; the sequence is MSAKYIFVTG…DKLALRYLHL (266 aa). A CTP-binding site is contributed by S14. Residue S14 participates in UTP binding. ATP contacts are provided by residues 15 to 20 and D72; that span reads SLGKGL. 2 residues coordinate Mg(2+): D72 and E140. Residues 147-149, 187-192, and K223 each bind CTP; these read DIE and KTKPTQ. Residues 187–192 and K223 each bind UTP; that span reads KTKPTQ. ATP is bound at residue 239 to 241; sequence KDV. The 243-residue stretch at 291 to 533 folds into the Glutamine amidotransferase type-1 domain; that stretch reads SIGIVGKYVE…VKAAYQNHKP (243 aa). An L-glutamine-binding site is contributed by G353. C380 (nucleophile; for glutamine hydrolysis) is an active-site residue. L-glutamine-binding positions include 381–384, E404, and R461; that span reads LGMQ. Active-site residues include H506 and E508.

The protein belongs to the CTP synthase family. As to quaternary structure, homotetramer.

The catalysed reaction is UTP + L-glutamine + ATP + H2O = CTP + L-glutamate + ADP + phosphate + 2 H(+). It carries out the reaction L-glutamine + H2O = L-glutamate + NH4(+). The enzyme catalyses UTP + NH4(+) + ATP = CTP + ADP + phosphate + 2 H(+). It functions in the pathway pyrimidine metabolism; CTP biosynthesis via de novo pathway; CTP from UDP: step 2/2. Its activity is regulated as follows. Allosterically activated by GTP, when glutamine is the substrate; GTP has no effect on the reaction when ammonia is the substrate. The allosteric effector GTP functions by stabilizing the protein conformation that binds the tetrahedral intermediate(s) formed during glutamine hydrolysis. Inhibited by the product CTP, via allosteric rather than competitive inhibition. Functionally, catalyzes the ATP-dependent amination of UTP to CTP with either L-glutamine or ammonia as the source of nitrogen. Regulates intracellular CTP levels through interactions with the four ribonucleotide triphosphates. The polypeptide is CTP synthase (Acidobacterium capsulatum (strain ATCC 51196 / DSM 11244 / BCRC 80197 / JCM 7670 / NBRC 15755 / NCIMB 13165 / 161)).